Consider the following 948-residue polypeptide: Insulin receptor substrate 1 (948 aa).

Residues 8–109 form the PH domain; sequence GMALSGYLKK…WLDKLLVLQR (102 aa). An IRS-type PTB domain is found at 122 to 236; the sequence is YDQVWQVVIQ…SAMSAKTESN (115 aa). The disordered stretch occupies residues 247–270; that stretch reads PDLSHEPMRKRSSSANEASKPINV. Phosphoserine is present on residues serine 286 and serine 287. The segment covering 304-329 has biased composition (polar residues); that stretch reads RNGTLSESSNQTYFGSNHGLRSNTIS. The segment at 304 to 373 is disordered; the sequence is RNGTLSESSN…SDDNGSFSHY (70 aa). The residue at position 342 (serine 342) is a Phosphoserine. Tyrosine 410 is subject to Phosphotyrosine; by INSR. The YXXM motif 1 signature appears at 410 to 413; it reads YIPM. The segment at 528-559 is disordered; sequence ANRSQSSITKEGTSYSTSSNRQKKSTSAPLLS. Residues 529-556 show a composition bias toward polar residues; that stretch reads NRSQSSITKEGTSYSTSSNRQKKSTSAP. Serine 554 is subject to Phosphoserine. Positions 640 to 643 match the YXXM motif 2 motif; the sequence is YLEM. Positions 703 to 734 are disordered; it reads EKKSNSPLNETPCSLKPTDVESNSHDEHSTNN. Positions 720–731 are enriched in basic and acidic residues; it reads TDVESNSHDEHS. At tyrosine 891 the chain carries Phosphotyrosine; by INSR. The tract at residues 907-948 is disordered; that stretch reads YLKRGSRESPPVSACPGDGNTYAKIDFDQSDSSSSSSNIFNT. 2 positions are modified to phosphoserine: serine 912 and serine 915. Tyrosine 928 is subject to Phosphotyrosine; by INSR. The segment covering 936-948 has biased composition (low complexity); it reads SDSSSSSSNIFNT.

In terms of assembly, bindings to phosphatidylinositol 3-kinase and SHP2.

Its function is as follows. Activates phosphatidylinositol 3-kinase when bound to the regulatory p85 subunit. May mediate the control of various cellular processes by insulin-like peptides. When phosphorylated by the insulin receptor binds specifically to various cellular proteins containing SH2 domains. Involved in control of cell proliferation, cell size, and body and organ growth throughout development. Also has a role in a signaling pathway controlling the physiological response required to endure periods of low nutrient conditions. Insulin/insulin-like growth factor (IGF) signaling pathway has a role in regulating aging and is necessary in the ovary for vitellogenic maturation. The protein is Insulin receptor substrate 1 of Drosophila erecta (Fruit fly).